Consider the following 335-residue polypeptide: Nucleoid-associated protein Ent638_2782 (335 aa).

Belongs to the YejK family.

Its subcellular location is the cytoplasm. It is found in the nucleoid. The sequence is that of Nucleoid-associated protein Ent638_2782 from Enterobacter sp. (strain 638).